Consider the following 342-residue polypeptide: Dihydroorotate dehydrogenase (quinone) (342 aa).

Residues 60-64 (AGLDK) and Thr84 contribute to the FMN site. Lys64 contributes to the substrate binding site. A substrate-binding site is contributed by 109–113 (NRMGF). FMN is bound by residues Asn137 and Asn170. Asn170 is a substrate binding site. Ser173 acts as the Nucleophile in catalysis. Substrate is bound at residue Asn175. Residues Lys215 and Thr243 each contribute to the FMN site. 244–245 (NT) is a binding site for substrate. Residues Gly266, Gly295, and 316–317 (YS) contribute to the FMN site.

This sequence belongs to the dihydroorotate dehydrogenase family. Type 2 subfamily. In terms of assembly, monomer. FMN serves as cofactor.

The protein resides in the cell membrane. It carries out the reaction (S)-dihydroorotate + a quinone = orotate + a quinol. The protein operates within pyrimidine metabolism; UMP biosynthesis via de novo pathway; orotate from (S)-dihydroorotate (quinone route): step 1/1. Catalyzes the conversion of dihydroorotate to orotate with quinone as electron acceptor. The protein is Dihydroorotate dehydrogenase (quinone) of Nitrosomonas europaea (strain ATCC 19718 / CIP 103999 / KCTC 2705 / NBRC 14298).